The chain runs to 66 residues: Large ribosomal subunit protein uL29c (66 aa).

This sequence belongs to the universal ribosomal protein uL29 family.

The protein resides in the plastid. The protein localises to the chloroplast. In Gracilaria tenuistipitata var. liui (Red alga), this protein is Large ribosomal subunit protein uL29c.